Reading from the N-terminus, the 128-residue chain is Methylglyoxal synthase (128 aa).

Residues 1 to 128 enclose the MGS-like domain; sequence MRIALIAHDR…MQDHPGNRQA (128 aa). Substrate-binding positions include H8, K12, 34–37, and 54–55; these read TGTT and SG. D60 (proton donor/acceptor) is an active-site residue. A substrate-binding site is contributed by H87.

It belongs to the methylglyoxal synthase family.

The catalysed reaction is dihydroxyacetone phosphate = methylglyoxal + phosphate. Its function is as follows. Catalyzes the formation of methylglyoxal from dihydroxyacetone phosphate. This chain is Methylglyoxal synthase, found in Moorella thermoacetica (strain ATCC 39073 / JCM 9320).